The chain runs to 549 residues: Oxygen-dependent choline dehydrogenase (549 aa).

Asp4–Glu33 provides a ligand contact to FAD. The active-site Proton acceptor is His465. The disordered stretch occupies residues Pro530–Arg549.

Belongs to the GMC oxidoreductase family. FAD serves as cofactor.

It catalyses the reaction choline + A = betaine aldehyde + AH2. The catalysed reaction is betaine aldehyde + NAD(+) + H2O = glycine betaine + NADH + 2 H(+). The protein operates within amine and polyamine biosynthesis; betaine biosynthesis via choline pathway; betaine aldehyde from choline (cytochrome c reductase route): step 1/1. Functionally, involved in the biosynthesis of the osmoprotectant glycine betaine. Catalyzes the oxidation of choline to betaine aldehyde and betaine aldehyde to glycine betaine at the same rate. The chain is Oxygen-dependent choline dehydrogenase from Rhizobium etli (strain ATCC 51251 / DSM 11541 / JCM 21823 / NBRC 15573 / CFN 42).